We begin with the raw amino-acid sequence, 163 residues long: ATP synthase subunit delta, mitochondrial (163 aa).

A mitochondrion-targeting transit peptide spans Met1–Ala18.

It belongs to the ATPase epsilon chain family. As to quaternary structure, subunit of the F-type ATPase which has 2 components, CF(1) - the catalytic core - and CF(0) - the membrane proton channel.

It is found in the mitochondrion. The protein localises to the mitochondrion inner membrane. Functionally, mitochondrial membrane ATP synthase (F(1)F(0) ATP synthase or Complex V) produces ATP from ADP in the presence of a proton gradient across the membrane which is generated by electron transport complexes of the respiratory chain. F-type ATPases consist of two structural domains, F(1) - containing the extramembraneous catalytic core, and F(0) - containing the membrane proton channel, linked together by a central stalk and a peripheral stalk. During catalysis, ATP turnover in the catalytic domain of F(1) is coupled via a rotary mechanism of the central stalk subunits to proton translocation. Part of the complex F(1) domain and of the central stalk which is part of the complex rotary element. In Caenorhabditis elegans, this protein is ATP synthase subunit delta, mitochondrial.